The sequence spans 613 residues: Dihydroxy-acid dehydratase (613 aa).

Position 81 (aspartate 81) interacts with Mg(2+). Cysteine 122 provides a ligand contact to [2Fe-2S] cluster. Aspartate 123 and lysine 124 together coordinate Mg(2+). Lysine 124 is modified (N6-carboxylysine). [2Fe-2S] cluster is bound at residue cysteine 195. Glutamate 491 contributes to the Mg(2+) binding site. The Proton acceptor role is filled by serine 517.

It belongs to the IlvD/Edd family. As to quaternary structure, homodimer. [2Fe-2S] cluster serves as cofactor. The cofactor is Mg(2+).

The catalysed reaction is (2R)-2,3-dihydroxy-3-methylbutanoate = 3-methyl-2-oxobutanoate + H2O. It carries out the reaction (2R,3R)-2,3-dihydroxy-3-methylpentanoate = (S)-3-methyl-2-oxopentanoate + H2O. Its pathway is amino-acid biosynthesis; L-isoleucine biosynthesis; L-isoleucine from 2-oxobutanoate: step 3/4. The protein operates within amino-acid biosynthesis; L-valine biosynthesis; L-valine from pyruvate: step 3/4. Its function is as follows. Functions in the biosynthesis of branched-chain amino acids. Catalyzes the dehydration of (2R,3R)-2,3-dihydroxy-3-methylpentanoate (2,3-dihydroxy-3-methylvalerate) into 2-oxo-3-methylpentanoate (2-oxo-3-methylvalerate) and of (2R)-2,3-dihydroxy-3-methylbutanoate (2,3-dihydroxyisovalerate) into 2-oxo-3-methylbutanoate (2-oxoisovalerate), the penultimate precursor to L-isoleucine and L-valine, respectively. In Vibrio parahaemolyticus serotype O3:K6 (strain RIMD 2210633), this protein is Dihydroxy-acid dehydratase.